The sequence spans 570 residues: Laccase-3 (570 aa).

An N-terminal signal peptide occupies residues Met-1–Ala-25. Plastocyanin-like domains are found at residues Val-33–Gly-149 and Arg-159–Ala-310. The N-linked (GlcNAc...) asparagine glycan is linked to Asn-79. His-83, His-85, His-128, and His-130 together coordinate Cu cation. Asn-188, Asn-298, Asn-332, Asn-383, Asn-393, and Asn-433 each carry an N-linked (GlcNAc...) asparagine glycan. Positions Asp-419–Arg-554 constitute a Plastocyanin-like 3 domain. Cu cation-binding residues include His-471, His-474, His-476, His-533, Cys-534, His-535, and His-539.

It belongs to the multicopper oxidase family. Requires Cu cation as cofactor. As to expression, mostly expressed in roots and siliques.

It localises to the secreted. The protein resides in the extracellular space. Its subcellular location is the apoplast. It catalyses the reaction 4 hydroquinone + O2 = 4 benzosemiquinone + 2 H2O. In terms of biological role, lignin degradation and detoxification of lignin-derived products. The polypeptide is Laccase-3 (LAC3) (Arabidopsis thaliana (Mouse-ear cress)).